A 473-amino-acid polypeptide reads, in one-letter code: MANTSHSSQDQFANKAQAWSARFSEPVSDLVKRYTASVDFDKRMARHDIRGSLAHADMLAAQGIISAQDLADIQRGMQQILSEIDAGSFQWLLDLEDVHLNIEKRLVELVGDAGKRLHTGRSRNDQVATDIRLWLRDEIDTLVDLLRQLRHALATVALENAATIMPGFTHLQVAQPVTFGHHLLAYAEMFGRDAERLADCRRRVNRLPLGAAALAGTSYPIDRERVARTLGFDGVCRNSLDAVSDRDFGIEFCAAGALIMTHISRLSEELVLWMSPRVGFIDLADRFCTGSSIMPQKKNPDVPELARGKTGRVNGHLVALLTLMKGQPLAYNKDNQEDKEGLFDTADTLRDTLTIFADMAGGIKVKADNMRAAALQGFATATDLADYLVKRGLPFRDAHEIVAHAVRDCEQRGCDLADLSLADLQAYHPSIGEDIHQVLTLEGSVAARKHIGGTAPERVREEAQRVLAETAGA.

This sequence belongs to the lyase 1 family. Argininosuccinate lyase subfamily.

The protein resides in the cytoplasm. It carries out the reaction 2-(N(omega)-L-arginino)succinate = fumarate + L-arginine. It functions in the pathway amino-acid biosynthesis; L-arginine biosynthesis; L-arginine from L-ornithine and carbamoyl phosphate: step 3/3. The protein is Argininosuccinate lyase of Bordetella pertussis (strain Tohama I / ATCC BAA-589 / NCTC 13251).